We begin with the raw amino-acid sequence, 235 residues long: Aspartate/glutamate leucyltransferase (235 aa).

It belongs to the R-transferase family. Bpt subfamily.

The protein localises to the cytoplasm. It catalyses the reaction N-terminal L-glutamyl-[protein] + L-leucyl-tRNA(Leu) = N-terminal L-leucyl-L-glutamyl-[protein] + tRNA(Leu) + H(+). It carries out the reaction N-terminal L-aspartyl-[protein] + L-leucyl-tRNA(Leu) = N-terminal L-leucyl-L-aspartyl-[protein] + tRNA(Leu) + H(+). Functions in the N-end rule pathway of protein degradation where it conjugates Leu from its aminoacyl-tRNA to the N-termini of proteins containing an N-terminal aspartate or glutamate. This Pseudomonas putida (strain ATCC 700007 / DSM 6899 / JCM 31910 / BCRC 17059 / LMG 24140 / F1) protein is Aspartate/glutamate leucyltransferase.